Here is a 1337-residue protein sequence, read N- to C-terminus: MMSASNLSVIHEVLLVLLNHQRINLPYENLEASLSRMLFLSSFVQEVVQVPIPCNVSANRSVSGVYSPGDLVWAKMEGYPWWPCLIYNHPTEGTIVRGKGSSARIHVQFFDVSPTRGWVSIKYLRPYKGSSDREVLKGGMFYSMKPEIKKAMELADDAMSKDKTKRLELAVCSEPSDTEEAEEEEMEQMSGSASGDSDDSNSEEDVKGNKRVPNRGSAIKAKRRRVLDSDSDRDGSDVEFKPDVKEASSEEASSGVDENEATDVETDEESIEESPIKVPSKRKRGNVSKPSKRSSLENEHSEAPKRAAPVSLEAKSKLTLFAAPENFESQANACSGGTNGFAAWEHEKLEWLQEGKKKDAHRRRQNHPDYDPCTLYVPEDYLNKCTPGMRRWWQLKSQNFDAVICYKVGKFYELYHMDAVTGVNELGLIFMKGSWAHSGFPETAFGRFSAILVQKGYKIARVEQTETPEMMEARCKATAHTTKFDKVVRREICRIITKGTQTYSIIDCDPTENHNKYLLCVKEKEDSSGQRVYGVCFVDTSVGKFYVGQFSDDRHCSRFRTLVAHYTPVQVLFEKGNLTVDTQKILKGSLISCIQEGLISGSQFWSASKTLKVLLEEEYFKENQNTESGCVLPSVIKSLTSESDSLGLTPGENSELALSALGGIVFYLKKCLIDQELLSLANFEKYIPVDADNAKTVSSSNFFARTDRRMVLDGVTLMNLEVLQNGTNGTTEGTLLERIDSCCTPFGKRLLKQWLCAPLCNPTSINDRLDAVEDLLAVPAKLTEITEHLKKLPDLERLLSKIHSIGSPLKSQNHPDSRAIFYEEIKYSKKKIADFLSALEGFKVMNEIVDAMEEVASDFKSQVLKQLVTRKAKHPDGRFPDLSAELKRWDTAFDHNQARKTGVITPKAGFDPDYDKALQDIKTVEEDFRTYLDKQRKLLGLKSVLYWGTGKNRYQMEIPETATSRNLPEEYELKSTRKGYKRYWTKEIEKMLAELINAEERRDAALKDCMRRLFYNFDKNSQDWQTAVQCIAVLDVLMSLANYSQDGDGPLCRPVILLPVDSAPPFLELKNARHPCITKTFFGDDFIPNDIVIGSKDEDGGSEASCVLVTGPNMGGKSTLMRQAGLLVIMAQLGCYVPAEVCRLTPIDRVFTRLGASDRIMSGESTFFVELSETSSILQHATEHSLVLVDELGRGTATFDGTAIASAVVRELAENIKCRTLFSTHYHSLVEDYSGSAAVRLGHMACMVENESEDPSQETITFLYKFIEGACPKSYGFNAARLADIPEEIIQKGHRKAKEFEKKTMSLRIFRFLCRVVDGVTHDANAVGKLTTMLSHL.

Residues 68 to 130 (PGDLVWAKME…IKYLRPYKGS (63 aa)) form the PWWP domain. Residues 170-310 (AVCSEPSDTE…SEAPKRAAPV (141 aa)) are disordered. The segment covering 176 to 187 (SDTEEAEEEEME) has biased composition (acidic residues). Positions 226 to 248 (VLDSDSDRDGSDVEFKPDVKEAS) are enriched in basic and acidic residues. The segment covering 257-272 (DENEATDVETDEESIE) has biased composition (acidic residues). The span at 279–292 (PSKRKRGNVSKPSK) shows a compositional bias: basic residues. Over residues 294 to 305 (SSLENEHSEAPK) the composition is skewed to basic and acidic residues. 1111 to 1118 (GPNMGGKS) lines the ATP pocket.

Belongs to the DNA mismatch repair MutS family.

It localises to the nucleus. Component of the post-replicative DNA mismatch repair system (MMR). Involved in B cell growth by positively regulating B cell proliferation and controlling replication efficiency. Controls cell cycle to prevent re-replication and defects in DNA damage-induced G2 checkpoint. Doesn't seem to counteract or control the immunoglobulin gene conversion (Ig GC) and to contribute to guanine/uracil mismatch repair. This chain is DNA mismatch repair protein Msh6, found in Gallus gallus (Chicken).